We begin with the raw amino-acid sequence, 451 residues long: Protoheme IX farnesyltransferase, mitochondrial (451 aa).

6 consecutive transmembrane segments (helical) span residues 149-169 (TILV…PATV), 240-260 (PTVA…YTSL), 265-285 (IINT…GWAA), 289-309 (LTHP…FPHF), 339-359 (VALR…YFNI), and 414-434 (KAFF…ILHK).

Belongs to the UbiA prenyltransferase family.

It localises to the mitochondrion membrane. In terms of biological role, converts protoheme IX and farnesyl diphosphate to heme O. In Candida glabrata (strain ATCC 2001 / BCRC 20586 / JCM 3761 / NBRC 0622 / NRRL Y-65 / CBS 138) (Yeast), this protein is Protoheme IX farnesyltransferase, mitochondrial (COX10).